A 1010-amino-acid chain; its full sequence is MGDKGEKESPKKGKGKRDLDDLKKEVAMTEHKMSIEEVCRKYNTDCVQGLTHSKAQEILARDGPNALTPPPTTPEWVKFCRQLFGGFSILLWIGAILCFLAYGIQAGTEDEPSNDNLYLGIVLAAVVIITGCFSYYQEAKSSKIMESFKNMVPQQALVIREGEKMQLNAEEVVVGDLVEVKGGDRVPADLRIISAHGCKVDNSSLTGESEPQTRSPDCTHDNPLETRNITFFSTNCVEGTARGVVIATGDRTVMGRIATLASGLEVGKTPIAVEIEHFIQLITGVAVFLGISFFVLSLILGYTWLEAVIFLIGIIVANVPEGLLATVTVCLTLTAKRMARKNCLVKNLEAVETLGSTSTICSDKTGTLTQNRMTVAHMWFDNQIHEADTTEDQSGTSFDKSSATWVALSHIAGLCNRAVFKGGQENVPILKRDVAGDASESALLKCIELSSGSVKVMRERNKKVAEIPFNSTNKYQLSIHETEDPNDNRYLLVMKGAPERILDRCSTILLQGKEQPLDEEMKEAFQNAYLELGGLGERVLGFCHFYLPEEQYPKGFAFDCDDVNFATDNLCFVGLMSMIDPPRAAVPDAVGKCRSAGIKVIMVTGDHPITAKAIAKGVGIISEGNETVEDIAARLNIPVSQVNPRDAKACVIHGTDLKDMSSEQIDEILQNHTEIVFARTSPQQKLIIVEGCQRQGAIVAVTGDGVNDSPALKKADIGVAMGIRGSDVSKQAADMILLDDNFASIVTGVEEGRLIFDNLKKSIAYTLTSNIPEITPFLLFIMANIPLPLGTITILCIDLGTDMVPAISLAYEAAESDIMKRQPRNPRSDKLVNERLISMAYGQIGMIQALGGFFSYFVILAENGFLPSCLVGIRLSWDDRTINDLEDSYGQQWTYEQRKVVEFTCHTAFFVSIVVVQWADLIICKTRRNSVFQQGMKNKILIFGLFEETALAAFLSYCPGMDVALRMYPLKPSWWFCAFPYSFLIFVYDEIRKLILRRNPGGWVEKETYY.

A disordered region spans residues 1–21; it reads MGDKGEKESPKKGKGKRDLDD. Residues 1-74 are Cytoplasmic-facing; the sequence is MGDKGEKESP…NALTPPPTTP (74 aa). The interaction with phosphoinositide-3 kinase stretch occupies residues 69–71; that stretch reads PPP. The helical transmembrane segment at 75-95 threads the bilayer; sequence EWVKFCRQLFGGFSILLWIGA. Residues 96-118 lie on the Extracellular side of the membrane; the sequence is ILCFLAYGIQAGTEDEPSNDNLY. The helical transmembrane segment at 119–139 threads the bilayer; it reads LGIVLAAVVIITGCFSYYQEA. At 140-275 the chain is on the cytoplasmic side; that stretch reads KSSKIMESFK…VGKTPIAVEI (136 aa). The helical transmembrane segment at 276-295 threads the bilayer; the sequence is EHFIQLITGVAVFLGISFFV. Over 296–307 the chain is Extracellular; it reads LSLILGYTWLEA. The helical transmembrane segment at 308–325 threads the bilayer; sequence VIFLIGIIVANVPEGLLA. Over 326-759 the chain is Cytoplasmic; sequence TVTVCLTLTA…EEGRLIFDNL (434 aa). Asp363 functions as the 4-aspartylphosphate intermediate in the catalytic mechanism. Mg(2+) contacts are provided by Asp704 and Asp708. The helical transmembrane segment at 760–779 threads the bilayer; sequence KKSIAYTLTSNIPEITPFLL. The Extracellular segment spans residues 780 to 789; it reads FIMANIPLPL. A helical transmembrane segment spans residues 790 to 810; it reads GTITILCIDLGTDMVPAISLA. Topologically, residues 811–830 are cytoplasmic; sequence YEAAESDIMKRQPRNPRSDK. Residues 831–853 form a helical membrane-spanning segment; the sequence is LVNERLISMAYGQIGMIQALGGF. Over 854–905 the chain is Extracellular; the sequence is FSYFVILAENGFLPSCLVGIRLSWDDRTINDLEDSYGQQWTYEQRKVVEFTC. The chain crosses the membrane as a helical span at residues 906–925; the sequence is HTAFFVSIVVVQWADLIICK. Residues 926-938 lie on the Cytoplasmic side of the membrane; it reads TRRNSVFQQGMKN. Ser930 carries the phosphoserine; by PKA modification. The chain crosses the membrane as a helical span at residues 939 to 957; sequence KILIFGLFEETALAAFLSY. Residues 958-972 lie on the Extracellular side of the membrane; sequence CPGMDVALRMYPLKP. The chain crosses the membrane as a helical span at residues 973–993; sequence SWWFCAFPYSFLIFVYDEIRK. Residues 994–1010 lie on the Cytoplasmic side of the membrane; sequence LILRRNPGGWVEKETYY.

It belongs to the cation transport ATPase (P-type) (TC 3.A.3) family. Type IIC subfamily. In terms of assembly, the sodium/potassium-transporting ATPase is composed of a catalytic alpha subunit, an auxiliary non-catalytic beta subunit and an additional regulatory subunit.

It localises to the cell membrane. The catalysed reaction is K(+)(out) + Na(+)(in) + ATP + H2O = K(+)(in) + Na(+)(out) + ADP + phosphate + H(+). Its function is as follows. This is the catalytic component of the active enzyme, which catalyzes the hydrolysis of ATP coupled with the exchange of sodium and potassium ions across the plasma membrane. This action creates the electrochemical gradient of sodium and potassium ions, providing the energy for active transport of various nutrients. In Gallus gallus (Chicken), this protein is Sodium/potassium-transporting ATPase subunit alpha-3 (ATP1A3).